The following is a 1017-amino-acid chain: Multiple C2 domain and transmembrane region protein 14 (1017 aa).

Residues 1-110 enclose the C2 1 domain; that stretch reads MADNVLRKLI…ASAGSETLVY (110 aa). The segment at 139-231 is disordered; that stretch reads AAPAATEPKP…PAEVKNPPIP (93 aa). Over residues 141–153 the composition is skewed to low complexity; sequence PAATEPKPEAAAA. Residues 154–213 show a composition bias toward basic and acidic residues; that stretch reads TEEKPPEIAKAEDGKKETEAAKTEEKKEGDKKEEEKPKEEAKPDEKKPDAPPDTKAKKPD. Residues 217 to 231 are compositionally biased toward pro residues; it reads APPPPPAEVKNPPIP. 3 C2 domains span residues 258 to 387, 420 to 554, and 587 to 714; these read DLEL…PQWY, DSGG…SRWF, and VTSD…LNSY. The Ca(2+) site is built by Asp296, Asn299, Asp352, Thr355, and Glu359. A run of 2 helical transmembrane segments spans residues 851–871 and 957–977; these read VAIV…AFLI and ATCI…IVPF.

It belongs to the MCTP family. Ca(2+) serves as cofactor. In terms of tissue distribution, expressed in incipient leaf primordia and in roots meristems. Observed in flowers.

The protein resides in the membrane. It is found in the vesicle. The protein localises to the golgi apparatus membrane. Functionally, may function as a signaling molecule by regulating the trafficking of other regulators. In Arabidopsis thaliana (Mouse-ear cress), this protein is Multiple C2 domain and transmembrane region protein 14.